The primary structure comprises 107 residues: Thioredoxin 1 (107 aa).

Positions 2–107 (SVAAAVTDAT…TLANTLDKHL (106 aa)) constitute a Thioredoxin domain. Cysteine 32 and cysteine 35 form a disulfide bridge.

The protein belongs to the thioredoxin family.

Functionally, participates in various redox reactions through the reversible oxidation of its active center dithiol to a disulfide and catalyzes dithiol-disulfide exchange reactions. The protein is Thioredoxin 1 (trxA) of Synechococcus elongatus (strain ATCC 33912 / PCC 7942 / FACHB-805) (Anacystis nidulans R2).